The chain runs to 402 residues: Glutamate N-acetyltransferase (402 aa).

Substrate-binding residues include Thr151, Lys178, Thr189, Glu267, Asn397, and Thr402. Catalysis depends on Thr189, which acts as the Nucleophile.

This sequence belongs to the ArgJ family. As to quaternary structure, heterotetramer of two alpha and two beta chains.

Its subcellular location is the cytoplasm. The catalysed reaction is N(2)-acetyl-L-ornithine + L-glutamate = N-acetyl-L-glutamate + L-ornithine. It participates in amino-acid biosynthesis; L-arginine biosynthesis; L-ornithine and N-acetyl-L-glutamate from L-glutamate and N(2)-acetyl-L-ornithine (cyclic): step 1/1. Its function is as follows. Catalyzes the transfer of the acetyl group from N(2)-acetylornithine to glutamate, forming N-acetylglutamate and L-ornithine. This chain is Glutamate N-acetyltransferase, found in Methanothermobacter thermautotrophicus (strain ATCC 29096 / DSM 1053 / JCM 10044 / NBRC 100330 / Delta H) (Methanobacterium thermoautotrophicum).